We begin with the raw amino-acid sequence, 531 residues long: Multidrug resistance protein fnx1 (531 aa).

The Cytoplasmic segment spans residues 1-30 (MVDQVNLATEQTSLLYPEVSRKKEELSVNK). A helical membrane pass occupies residues 31–51 (WTILPALWVGGFLSALDMTIV). Residues 52–225 (ASLYPVIGSE…NASLLSRIDY (174 aa)) are Lumenal-facing. A helical transmembrane segment spans residues 226-246 (LGSFLLVTGITALVVTFNMGG). Topologically, residues 247–252 (DAFPWV) are cytoplasmic. The helical transmembrane segment at 253-273 (SPVIITLLVSSVLILFAFYWV) threads the bilayer. At 274–297 (EKNIAVEPIAPVEILSQPTPLNVC) the chain is on the lumenal side. The chain crosses the membrane as a helical span at residues 298-318 (LGNFFNAFCSFVIVYELPLFF). Over 319 to 360 (ETTLLMPSSEAGVRIFPYVISTSVGSLCSGLYMKKTGRYRNL) the chain is Cytoplasmic. Residues 361 to 381 (VIAGFFFMLMGIVSFAVLTSF) form a helical membrane-spanning segment. Topologically, residues 382–385 (GHRT) are lumenal. The helical transmembrane segment at 386–406 (PLILISLCLAMTGCSYGMNLT) threads the bilayer. At 407–496 (STLIAIISSL…QKLVIKSYAT (90 aa)) the chain is on the cytoplasmic side. The chain crosses the membrane as a helical span at residues 497–517 (AFTWTFALVAIIAFAGFWCSL). Residues 518 to 531 (RIKQFYLHTSVDRS) are Lumenal-facing.

It belongs to the major facilitator superfamily.

The protein resides in the vacuole membrane. Efflux transporter. Confers resistance to a variety of toxic compounds. The protein is Multidrug resistance protein fnx1 (fnx1) of Schizosaccharomyces pombe (strain 972 / ATCC 24843) (Fission yeast).